The following is a 329-amino-acid chain: Red chlorophyll catabolite reductase 1, chloroplastic (329 aa).

Pro residues predominate over residues 1–11; sequence MLQLRSPPPAT. Residues 1 to 50 constitute a chloroplast transit peptide; the sequence is MLQLRSPPPATSSPSSAVSFPTLAPRLLPLRRRRRGAGSQLGGKTSSAVR. The segment at 1–61 is disordered; the sequence is MLQLRSPPPA…SSAAAPGATE (61 aa). Composition is skewed to low complexity over residues 12 to 28 and 46 to 59; these read SSPS…PRLL and SSAV…APGA. Residues Glu-163, 216–218, and Asp-299 each bind red chlorophyll catabolite; that span reads YRS.

As to expression, expressed in leaves. Expressed at low levels in roots, stems, panicles and seeds.

Its subcellular location is the plastid. The protein localises to the chloroplast. It carries out the reaction primary fluorescent chlorophyll catabolite + 2 oxidized [2Fe-2S]-[ferredoxin] = red chlorophyll catabolite + 2 reduced [2Fe-2S]-[ferredoxin] + 3 H(+). It participates in porphyrin-containing compound metabolism; chlorophyll degradation. Catalyzes the key reaction of chlorophyll catabolism, porphyrin macrocycle cleavage of pheophorbide a (pheide a) to a primary fluorescent catabolite (pFCC). Works in a two-step reaction with pheophorbide a oxygenase (PaO) by reducing the C20/C1 double bond of the intermediate, RCC. Belongs to the chlorophyll catabolic enzymes (CCEs). May play a role in senescence and response to wounding. The protein is Red chlorophyll catabolite reductase 1, chloroplastic of Oryza sativa subsp. japonica (Rice).